Reading from the N-terminus, the 124-residue chain is Large ribosomal subunit protein bL12 (124 aa).

This sequence belongs to the bacterial ribosomal protein bL12 family. Homodimer. Part of the ribosomal stalk of the 50S ribosomal subunit. Forms a multimeric L10(L12)X complex, where L10 forms an elongated spine to which 2 to 4 L12 dimers bind in a sequential fashion. Binds GTP-bound translation factors.

Functionally, forms part of the ribosomal stalk which helps the ribosome interact with GTP-bound translation factors. Is thus essential for accurate translation. The chain is Large ribosomal subunit protein bL12 from Phocaeicola vulgatus (strain ATCC 8482 / DSM 1447 / JCM 5826 / CCUG 4940 / NBRC 14291 / NCTC 11154) (Bacteroides vulgatus).